We begin with the raw amino-acid sequence, 388 residues long: Succinate--CoA ligase [ADP-forming] subunit beta (388 aa).

Residues 9–244 (KQLFARYGLP…PSQEDPREAQ (236 aa)) enclose the ATP-grasp domain. ATP-binding positions include Lys46, 53-55 (GRG), Glu99, Thr102, and Glu107. Positions 199 and 213 each coordinate Mg(2+). Residues Asn264 and 321 to 323 (GIV) contribute to the substrate site.

Belongs to the succinate/malate CoA ligase beta subunit family. In terms of assembly, heterotetramer of two alpha and two beta subunits. Requires Mg(2+) as cofactor.

It catalyses the reaction succinate + ATP + CoA = succinyl-CoA + ADP + phosphate. It carries out the reaction GTP + succinate + CoA = succinyl-CoA + GDP + phosphate. Its pathway is carbohydrate metabolism; tricarboxylic acid cycle; succinate from succinyl-CoA (ligase route): step 1/1. Functionally, succinyl-CoA synthetase functions in the citric acid cycle (TCA), coupling the hydrolysis of succinyl-CoA to the synthesis of either ATP or GTP and thus represents the only step of substrate-level phosphorylation in the TCA. The beta subunit provides nucleotide specificity of the enzyme and binds the substrate succinate, while the binding sites for coenzyme A and phosphate are found in the alpha subunit. The sequence is that of Succinate--CoA ligase [ADP-forming] subunit beta from Photorhabdus laumondii subsp. laumondii (strain DSM 15139 / CIP 105565 / TT01) (Photorhabdus luminescens subsp. laumondii).